Here is a 119-residue protein sequence, read N- to C-terminus: UPF0231 protein YPTB0717 (119 aa).

Belongs to the UPF0231 family.

This is UPF0231 protein YPTB0717 from Yersinia pseudotuberculosis serotype I (strain IP32953).